Consider the following 652-residue polypeptide: Iron-regulated outer membrane virulence protein (652 aa).

The first 25 residues, 1 to 25 (MSRFNPSPVSLSVTLGLMFSASAFA), serve as a signal peptide directing secretion. The TonB box signature appears at 33–40 (ETMVVTAA). The TBDR plug domain maps to 45–162 (VIQNAPASIS…IGGVINIITR (118 aa)). The TBDR beta-barrel domain maps to 167–652 (QWSGNVQLST…RYWLGLDIAF (486 aa)). A TonB C-terminal box motif is present at residues 635–652 (YGYVEDGRRYWLGLDIAF).

The protein belongs to the TonB-dependent receptor family.

The protein resides in the cell outer membrane. In terms of biological role, involved in the initial step of iron uptake by binding ferric vibriobactin, an iron chelatin siderophore that allows V.cholerae to extract iron from the environment. This Vibrio cholerae serotype O1 (strain ATCC 39315 / El Tor Inaba N16961) protein is Iron-regulated outer membrane virulence protein (irgA).